The primary structure comprises 880 residues: Protein translocase subunit SecA (880 aa).

Residues Q86, 104 to 108, and D511 contribute to the ATP site; that span reads GEGKT. The segment at 837-871 is disordered; the sequence is AQKIQRSDGDGARRPVEKPKKIGRNDPCPCGSGKK. The span at 841-860 shows a compositional bias: basic and acidic residues; sequence QRSDGDGARRPVEKPKKIGR. Residues C864, C866, C875, and C876 each coordinate Zn(2+).

It belongs to the SecA family. As to quaternary structure, monomer and homodimer. Part of the essential Sec protein translocation apparatus which comprises SecA, SecYEG and auxiliary proteins SecDF. Other proteins may also be involved. It depends on Zn(2+) as a cofactor.

It is found in the cell inner membrane. It localises to the cytoplasm. It carries out the reaction ATP + H2O + cellular proteinSide 1 = ADP + phosphate + cellular proteinSide 2.. Part of the Sec protein translocase complex. Interacts with the SecYEG preprotein conducting channel. Has a central role in coupling the hydrolysis of ATP to the transfer of proteins into and across the cell membrane, serving as an ATP-driven molecular motor driving the stepwise translocation of polypeptide chains across the membrane. The chain is Protein translocase subunit SecA from Thermodesulfovibrio yellowstonii (strain ATCC 51303 / DSM 11347 / YP87).